A 340-amino-acid chain; its full sequence is GTP 3',8-cyclase (340 aa).

The region spanning 20–246 (RFERQYVYLR…PKALSDGPAK (227 aa)) is the Radical SAM core domain. R29 contacts GTP. The [4Fe-4S] cluster site is built by C36 and C40. Y42 provides a ligand contact to S-adenosyl-L-methionine. C43 provides a ligand contact to [4Fe-4S] cluster. GTP is bound at residue R79. G83 contributes to the S-adenosyl-L-methionine binding site. Residue T110 participates in GTP binding. S134 provides a ligand contact to S-adenosyl-L-methionine. Position 171 (K171) interacts with GTP. M205 contributes to the S-adenosyl-L-methionine binding site. Residues C268 and C271 each coordinate [4Fe-4S] cluster. 273-275 (RLR) contacts GTP. C285 contributes to the [4Fe-4S] cluster binding site.

This sequence belongs to the radical SAM superfamily. MoaA family. As to quaternary structure, monomer and homodimer. The cofactor is [4Fe-4S] cluster.

The enzyme catalyses GTP + AH2 + S-adenosyl-L-methionine = (8S)-3',8-cyclo-7,8-dihydroguanosine 5'-triphosphate + 5'-deoxyadenosine + L-methionine + A + H(+). It functions in the pathway cofactor biosynthesis; molybdopterin biosynthesis. Its function is as follows. Catalyzes the cyclization of GTP to (8S)-3',8-cyclo-7,8-dihydroguanosine 5'-triphosphate. The protein is GTP 3',8-cyclase of Actinobacillus pleuropneumoniae serotype 3 (strain JL03).